Consider the following 277-residue polypeptide: Orotidine 5'-phosphate decarboxylase (277 aa).

Catalysis depends on lysine 93, which acts as the Proton donor.

Belongs to the OMP decarboxylase family. Type 2 subfamily.

The enzyme catalyses orotidine 5'-phosphate + H(+) = UMP + CO2. It functions in the pathway pyrimidine metabolism; UMP biosynthesis via de novo pathway; UMP from orotate: step 2/2. The sequence is that of Orotidine 5'-phosphate decarboxylase from Haloarcula marismortui (strain ATCC 43049 / DSM 3752 / JCM 8966 / VKM B-1809) (Halobacterium marismortui).